Consider the following 690-residue polypeptide: Protein MODIFIED TRANSPORT TO THE VACUOLE 1 (690 aa).

The VHS domain maps to 20–150 (VTSDEDKVAP…PESINRRIEG (131 aa)). Disordered stretches follow at residues 228–258 (DGNY…SVRV) and 518–551 (FSID…HQAP). Residues 243–257 (GHASGEASESSASVR) are compositionally biased toward low complexity. Polar residues predominate over residues 520 to 536 (IDENNSNQKGSSSSTLP).

As to quaternary structure, binds to clathrin heavy chain. As to expression, expressed in inflorescence stems, stigmas, roots, roots meristems, embryos, and floral and leaf vasculatures, but absent from the floral abscission zone.

The protein resides in the golgi apparatus. It localises to the trans-Golgi network. The protein localises to the cytoplasmic vesicle. It is found in the clathrin-coated vesicle. Mediates clathrin-dependent trafficking of vacuolar cargo from the trans-Golgi network (TGN). Promotes plant growth. In Arabidopsis thaliana (Mouse-ear cress), this protein is Protein MODIFIED TRANSPORT TO THE VACUOLE 1.